The sequence spans 143 residues: Endoribonuclease YbeY (143 aa).

Zn(2+) contacts are provided by H109, H113, and H119.

It belongs to the endoribonuclease YbeY family. It depends on Zn(2+) as a cofactor.

The protein resides in the cytoplasm. Single strand-specific metallo-endoribonuclease involved in late-stage 70S ribosome quality control and in maturation of the 3' terminus of the 16S rRNA. This Leptospira borgpetersenii serovar Hardjo-bovis (strain JB197) protein is Endoribonuclease YbeY.